A 745-amino-acid polypeptide reads, in one-letter code: F-box only protein 30 (745 aa).

The TRAF-type zinc finger occupies 48 to 109 (EHRLLCPFER…SYADRKSYEN (62 aa)). Disordered regions lie at residues 211–231 (NTSVPNDMDEQQNARESLEDQ) and 305–324 (GDSKQSNLTNGDCVASSDGT). Over residues 222–231 (QNARESLEDQ) the composition is skewed to basic and acidic residues. Polar residues predominate over residues 305–314 (GDSKQSNLTN). The F-box domain occupies 610-658 (NDHLSSLPFEVLQHIAGFLDGFSLCQLSCVSKLMRDVCGSLLQSRGMVI).

Part of a SCF (SKP1-cullin-F-box) protein ligase complex. Interacts with SKP1, CUL1 and RBX1/ROC1. Post-translationally, auto-ubiquitinated. May be neddylated. Neddylation may be required for E3 ligase activity.

It participates in protein modification; protein ubiquitination. In terms of biological role, substrate-recognition component of the SCF (SKP1-CUL1-F-box protein)-type E3 ubiquitin ligase complex. Required for muscle atrophy following denervation. The protein is F-box only protein 30 (FBXO30) of Homo sapiens (Human).